The sequence spans 329 residues: Quinone oxidoreductase (329 aa).

Alanine 2 carries the post-translational modification N-acetylalanine. N6-acetyllysine is present on lysine 23. NADP(+) contacts are provided by residues tyrosine 53, 158–161 (SGGV), glycine 181, histidine 200, asparagine 229, 246–249 (VGSR), and 269–271 (VAL). Position 248 is a phosphoserine (serine 248).

This sequence belongs to the zinc-containing alcohol dehydrogenase family. Quinone oxidoreductase subfamily. Homotetramer.

It localises to the cytoplasm. The enzyme catalyses 2 a quinone + NADPH + H(+) = 2 a 1,4-benzosemiquinone + NADP(+). In terms of biological role, does not have alcohol dehydrogenase activity. Binds NADP and acts through a one-electron transfer process. Orthoquinones, such as 1,2-naphthoquinone or 9,10-phenanthrenequinone, are the best substrates (in vitro). May act in the detoxification of xenobiotics. Interacts with (AU)-rich elements (ARE) in the 3'-UTR of target mRNA species and enhances their stability. NADPH binding interferes with mRNA binding. This is Quinone oxidoreductase (CRYZ) from Sus scrofa (Pig).